The sequence spans 387 residues: Phosphoglycerate kinase (387 aa).

Residues 21–23 (DLN), Arg-36, 59–62 (HLGR), Arg-113, and Arg-146 contribute to the substrate site. ATP is bound by residues Lys-197, Glu-314, and 340 to 343 (GGDT).

It belongs to the phosphoglycerate kinase family. As to quaternary structure, monomer.

It localises to the cytoplasm. It catalyses the reaction (2R)-3-phosphoglycerate + ATP = (2R)-3-phospho-glyceroyl phosphate + ADP. The protein operates within carbohydrate degradation; glycolysis; pyruvate from D-glyceraldehyde 3-phosphate: step 2/5. The chain is Phosphoglycerate kinase from Sodalis glossinidius (strain morsitans).